A 96-amino-acid polypeptide reads, in one-letter code: Small ribosomal subunit protein bS6 (96 aa).

Belongs to the bacterial ribosomal protein bS6 family.

In terms of biological role, binds together with bS18 to 16S ribosomal RNA. This chain is Small ribosomal subunit protein bS6, found in Streptococcus mutans serotype c (strain ATCC 700610 / UA159).